The following is a 196-amino-acid chain: N-(5'-phosphoribosyl)anthranilate isomerase (196 aa).

This sequence belongs to the TrpF family.

It catalyses the reaction N-(5-phospho-beta-D-ribosyl)anthranilate = 1-(2-carboxyphenylamino)-1-deoxy-D-ribulose 5-phosphate. It participates in amino-acid biosynthesis; L-tryptophan biosynthesis; L-tryptophan from chorismate: step 3/5. The chain is N-(5'-phosphoribosyl)anthranilate isomerase from Nitratiruptor sp. (strain SB155-2).